Reading from the N-terminus, the 224-residue chain is Ribonuclease HII (224 aa).

Positions 1–210 (MKVAGADEAG…AKKIEEKFKR (210 aa)) constitute an RNase H type-2 domain. A divalent metal cation-binding residues include Asp-7, Glu-8, and Asp-105.

Belongs to the RNase HII family. The cofactor is Mn(2+). Mg(2+) is required as a cofactor.

The protein localises to the cytoplasm. The catalysed reaction is Endonucleolytic cleavage to 5'-phosphomonoester.. Endonuclease that specifically degrades the RNA of RNA-DNA hybrids. This chain is Ribonuclease HII (rnhB), found in Pyrococcus abyssi (strain GE5 / Orsay).